We begin with the raw amino-acid sequence, 481 residues long: MAQGNEMHPRNPYRDKPPDFKALAIEYPEFRKFCQYVSNGKVTLDFRKDAAVRCLTQTLLKKDFSLNVNLPAGHLVPRVPQKLNYCLLIDDILQANSITSNVVGIDIGTGTSCIHALIGARHFGWKFVATDGDENSVQVAHENVARNEMGDSICVVHVNPAVKTVLMDVINSMPDSEFSFCMCNPPFFEKSDKEERFCEEPSLSNETYSNNFDFDMRSAPHSETIASSAELYVEGGEVAFVNRIIDDSVCLRDRIKFYTTMIGRKSSLKPLLQRLERFGENVKFLVHPLNQGKTKRWMLAWTFAKEMTLNTALKNSSISFQCPKPGLVKLMQEISRLGGRWSQEQPSVLVAEFKSVTWTNQRARRKANALLFENSAKRARWNTSSVACEAMMGNGDGKDSYTNSGNFVYSESFKTSDPAAVETSSQAYFPLPSGVTPRPIVKLRIQVDPDDKCDTLSFELISGAKQHLHQIVQYLKNLLCR.

S-adenosyl-L-methionine contacts are provided by K82, G108, D131, T164, and N184.

This sequence belongs to the methyltransferase superfamily. METTL16/RlmF family. In terms of assembly, self-associates. Interacts with dlc-1; the interaction is direct, and is required for nuclear localization of mett-10.

The protein resides in the nucleus. The enzyme catalyses an adenosine in mRNA + S-adenosyl-L-methionine = an N(6)-methyladenosine in mRNA + S-adenosyl-L-homocysteine + H(+). The catalysed reaction is adenosine in U6 snRNA + S-adenosyl-L-methionine = N(6)-methyladenosine in U6 snRNA + S-adenosyl-L-homocysteine + H(+). In terms of biological role, RNA N6-methyltransferase that methylates adenosine residues at the N(6) position of a subset of RNAs and is involved in S-adenosyl-L-methionine homeostasis by regulating splicing of S-adenosylmethionine synthase transcripts (sams-3, sams-4 and sams-5). Able to N6-methylate a subset of mRNAs containing the 5'UACAGAAAC-3' nonamer sequence. Plays a key role in S-adenosyl-L-methionine homeostasis: under rich-diet conditions, catalyzes N6-methylation of S-adenosylmethionine synthase mRNAs (sams-3, sams-4 and sams-5), directly inhibiting splicing and protein production of S-adenosylmethionine synthase. In addition to mRNAs, also able to mediate N6-methylation of U6 small nuclear RNA (U6 snRNA). Required for gamete production, inhibiting germ cell proliferative fate and ensuring germ cell meiotic development. Also promotes progression of the mitotic cell cycle in those germ cells that continue to proliferate. Plays a role in the development of the vulva, somatic gonad and embryo. This is U6 small nuclear RNA (adenine-(43)-N(6))-methyltransferase from Caenorhabditis briggsae.